The sequence spans 1703 residues: Pecanex-like protein 1 (1703 aa).

The next 2 membrane-spanning stretches (helical) occupy residues 31–53 (VNAL…YMAL) and 57–74 (MVIV…FLLL). A compositionally biased stretch (basic and acidic residues) spans 91–100 (VEHQTRESKG). Residues 91–126 (VEHQTRESKGSRGGTGGANDPVTRREDSNGLGDPGG) are disordered. N-linked (GlcNAc...) asparagine glycosylation occurs at N256. The next 3 helical transmembrane spans lie at 416-438 (VLAV…HGFF), 477-499 (AYSR…YGSL), and 525-547 (LVIV…QVNT). The N-linked (GlcNAc...) asparagine glycan is linked to N564. The next 4 helical transmembrane spans lie at 569–591 (LLSA…CFCY), 603–622 (IPVL…YHLS), 675–697 (LIVC…FIAL), and 704–721 (VLYG…YLLP). N988, N1129, and N1391 each carry an N-linked (GlcNAc...) asparagine glycan. Disordered regions lie at residues 1475-1556 (VQSG…HSIP) and 1577-1598 (TDPL…PTHA). Low complexity-rich tracts occupy residues 1485 to 1510 (ARAS…RTST) and 1518 to 1556 (RSST…HSIP). The segment covering 1582–1591 (QHHHPHHHPQ) has biased composition (basic residues). An N-linked (GlcNAc...) asparagine glycan is attached at N1622.

Belongs to the pecanex family.

It localises to the membrane. This Takifugu rubripes (Japanese pufferfish) protein is Pecanex-like protein 1.